We begin with the raw amino-acid sequence, 783 residues long: Glucosidase YgjK (783 aa).

The N-terminal stretch at 1–22 is a signal peptide; that stretch reads MKIKTILTPVTCALLISFSAHA. Residues 24 to 254 form an N-terminal domain region; it reads NADNYKNVIN…TTLYTTYSHL (231 aa). Positions 254–299 are linker; the sequence is LLTAQEVSKEQMQIRDILARPAFYLTASQQRWEEYLKKGLTNPDAT. Residues 300–783 form an a domain region; the sequence is PEQTRVAVKA…MLYNDFFRKQ (484 aa). Residues Asp454, Asn456, Asn458, Val460, and Glu462 each contribute to the Ca(2+) site. Asp524 serves as the catalytic Proton donor. Glu572 is a binding site for Ca(2+). Residue Glu750 is the Proton acceptor of the active site.

The protein belongs to the glycosyl hydrolase 63 family.

Functionally, glucoside hydrolase that cleaves the alpha-1,3-glucosidic linkage in nigerose. Has very low activity towards maltooligosaccharides, soluble starch, nigerotriose, kojibiose and trehalose. The chain is Glucosidase YgjK (ygjK) from Escherichia coli (strain K12).